The chain runs to 225 residues: Urease accessory protein UreG 2 (225 aa).

Residue Gly-31–Thr-38 coordinates GTP.

Belongs to the SIMIBI class G3E GTPase family. UreG subfamily. In terms of assembly, homodimer. UreD, UreF and UreG form a complex that acts as a GTP-hydrolysis-dependent molecular chaperone, activating the urease apoprotein by helping to assemble the nickel containing metallocenter of UreC. The UreE protein probably delivers the nickel.

The protein resides in the cytoplasm. Functionally, facilitates the functional incorporation of the urease nickel metallocenter. This process requires GTP hydrolysis, probably effectuated by UreG. This Streptomyces griseus subsp. griseus (strain JCM 4626 / CBS 651.72 / NBRC 13350 / KCC S-0626 / ISP 5235) protein is Urease accessory protein UreG 2.